Reading from the N-terminus, the 355-residue chain is Uroporphyrinogen decarboxylase (355 aa).

Substrate contacts are provided by residues 27–31 (RQAGR), aspartate 77, tyrosine 154, threonine 209, and histidine 328.

Belongs to the uroporphyrinogen decarboxylase family. In terms of assembly, homodimer.

The protein localises to the cytoplasm. The enzyme catalyses uroporphyrinogen III + 4 H(+) = coproporphyrinogen III + 4 CO2. The protein operates within porphyrin-containing compound metabolism; protoporphyrin-IX biosynthesis; coproporphyrinogen-III from 5-aminolevulinate: step 4/4. In terms of biological role, catalyzes the decarboxylation of four acetate groups of uroporphyrinogen-III to yield coproporphyrinogen-III. In Vibrio cholerae serotype O1 (strain ATCC 39541 / Classical Ogawa 395 / O395), this protein is Uroporphyrinogen decarboxylase.